Consider the following 267-residue polypeptide: 5'-methylthioadenosine nucleosidase (267 aa).

Glutamate 38 serves as the catalytic Proton acceptor. Residues threonine 116, 199–202 (KDME), and aspartate 225 contribute to the S-methyl-5'-thioadenosine site. Adenine contacts are provided by lysine 199 and aspartate 225. Residue aspartate 225 is the Proton donor of the active site.

This sequence belongs to the PNP/UDP phosphorylase family. MtnN subfamily. In terms of assembly, homodimer. Interacts with CBL3 in a calcium-dependent manner. As to expression, expressed in roots, leaves, stems, cauline leaves and flowers.

The catalysed reaction is S-methyl-5'-thioadenosine + H2O = 5-(methylsulfanyl)-D-ribose + adenine. Its pathway is amino-acid biosynthesis; L-methionine biosynthesis via salvage pathway; S-methyl-5-thio-alpha-D-ribose 1-phosphate from S-methyl-5'-thioadenosine (hydrolase route): step 1/2. Inhibited by CBL3 in a calcium-dependent manner. Inhibited by 5'-methylthiotubercidin (MTT) and by formycin A (FMA). In terms of biological role, enzyme of the methionine cycle that catalyzes the irreversible cleavage of the glycosidic bond in 5'-methylthioadenosine (MTA) to adenine and 5'-methylthioribose. Contributes to the maintenance of AdoMet homeostasis and is required to sustain high rates of ethylene synthesis. Inactive towards S-adenosylhomocysteine (SAH/AdoHcy). The sequence is that of 5'-methylthioadenosine nucleosidase (MTN1) from Arabidopsis thaliana (Mouse-ear cress).